Reading from the N-terminus, the 656-residue chain is Mucin-20 (656 aa).

Positions 1–21 (MGSVWGLAVPLLVFCWKVGVS) are cleaved as a signal peptide. Polar residues-rich tracts occupy residues 85–96 (ATSISSEVNSRD), 114–125 (PAASSLEAQTTS), and 159–170 (TTSPAPSFLDTQ). 3 disordered regions span residues 85–125 (ATSI…QTTS), 159–232 (TTSP…TQTI), and 329–348 (YLSS…LSSS). A compositionally biased stretch (low complexity) spans 171-227 (TTSPEPSSLTTSPAPSSLITSPTPSSLTTSPAPSFLDTQTTSPAPSSLTTSPAPSSL). Repeat copies occupy residues 180–188 (TTSPAPSSL), 189–197 (ITSPTPSSL), 198–206 (TTSPAPSFL), 210–218 (TTSPAPSSL), and 219–227 (TTSPAPSSL). The segment at 180 to 227 (TTSPAPSSLITSPTPSSLTTSPAPSFLDTQTTSPAPSSLTTSPAPSSL) is approximate repeats. N-linked (GlcNAc...) asparagine glycans are attached at residues asparagine 366 and asparagine 570. Residues 399–603 (TAALFTSEIL…WIRKTTKHDP (205 aa)) form an involved in oligomerization region. Positions 560 to 573 (STTASTSKNPNITL) are enriched in polar residues. The tract at residues 560–592 (STTASTSKNPNITLTKTTASPKPPTHPTTSAST) is disordered. An interaction with MET region spans residues 604 to 656 (GEDGGFLLVRLTVASPKDLTEHNAREKLMNQLRRELHARMPLVHMSFLSIRRG).

In terms of assembly, interacts with MET; oligomerization increases affinity for MET. As to expression, highly expressed in kidney. Up-regulated in renal tissues during renal injury.

The protein resides in the secreted. The protein localises to the apical cell membrane. It localises to the basolateral cell membrane. Its subcellular location is the cell projection. It is found in the microvillus membrane. Its function is as follows. May regulate MET signaling cascade. Seems to decrease hepatocyte growth factor (HGF)-induced transient MAPK activation. Blocks GRB2 recruitment to MET thus suppressing the GRB2-RAS pathway. Inhibits HGF-induced proliferation of MMP1 and MMP9 expression. The sequence is that of Mucin-20 (Muc20) from Mus musculus (Mouse).